The following is a 128-amino-acid chain: Transcription antitermination protein NusB (128 aa).

It belongs to the NusB family.

Involved in transcription antitermination. Required for transcription of ribosomal RNA (rRNA) genes. Binds specifically to the boxA antiterminator sequence of the ribosomal RNA (rrn) operons. This Exiguobacterium sp. (strain ATCC BAA-1283 / AT1b) protein is Transcription antitermination protein NusB.